Here is a 148-residue protein sequence, read N- to C-terminus: Large ribosomal subunit protein uL13 (148 aa).

2 stretches are compositionally biased toward basic and acidic residues: residues 71–81 (GKKEKQKEYHE) and 89–99 (DHSHSPEEMRA). Disordered stretches follow at residues 71–99 (GKKE…EMRA) and 125–148 (KKLK…LDNA).

It belongs to the universal ribosomal protein uL13 family. Part of the 50S ribosomal subunit.

Functionally, this protein is one of the early assembly proteins of the 50S ribosomal subunit, although it is not seen to bind rRNA by itself. It is important during the early stages of 50S assembly. This chain is Large ribosomal subunit protein uL13, found in Salinibacter ruber (strain DSM 13855 / M31).